A 1132-amino-acid chain; its full sequence is Telomerase reverse transcriptase (1132 aa).

The segment at 1-230 is RNA-interacting domain 1; the sequence is MPRAPRCRAV…ARRRGGSASR (230 aa). The tract at residues 58–197 is GQ motif; the sequence is VPWDARPPPA…PHASGPRRRL (140 aa). The tract at residues 137 to 141 is required for regulating specificity for telomeric DNA and for processivity for primer elongation; it reads WGLLL. Residues 210-320 are disordered; the sequence is AGVPLGLPAP…SRPPRPWDTP (111 aa). The segment covering 213-234 has biased composition (low complexity); the sequence is PLGLPAPGARRRGGSASRSLPL. The Bipartite nuclear localization signal motif lies at 222–240; the sequence is RRRGGSASRSLPLPKRPRR. At Ser227 the chain carries Phosphoserine; by PKB/AKT1. The linker stretch occupies residues 231 to 324; it reads SLPLPKRPRR…RPWDTPCPPV (94 aa). Residues 293–304 show a composition bias toward basic residues; sequence RHSHPSVGRQHH. The interval 301 to 538 is required for oligomerization; it reads RQHHAGPPST…VPAAEHRLRE (238 aa). Over residues 310 to 320 the composition is skewed to pro residues; it reads TSRPPRPWDTP. The interval 325–550 is RNA-interacting domain 2; the sequence is YAETKHFLYS…LAKFLHWLMS (226 aa). Residues 328–333 carry the TFLY; involved in RNA binding motif; it reads TKHFLY. Positions 376 to 521 are QFP motif; sequence PRRLPRLPQR…MSVRDCAWLR (146 aa). The CP motif stretch occupies residues 397–417; sequence LGNHAQCPYGVLLKTHCPLRA. A Phosphoserine; by DYRK2 modification is found at Ser457. The 331-residue stretch at 605 to 935 folds into the Reverse transcriptase domain; the sequence is EVRQHREARP…GLFPWCGLLL (331 aa). Tyr707 is modified (phosphotyrosine; by SRC-type Tyr-kinases). Residues Asp712, Asp868, and Asp869 each contribute to the Mg(2+) site. The tract at residues 914–928 is required for oligomerization; sequence LGGTAFVQMPAHGLF. A primer grip sequence region spans residues 930-934; it reads WCGLL. The segment at 936–1132 is CTE; sequence DTRTLEVQSD…LPSDFKTILD (197 aa).

It belongs to the reverse transcriptase family. Telomerase subfamily. In terms of assembly, catalytic component of the telomerase holoenzyme complex composed of one molecule of TERT, one molecule of WRAP53/TCAB1, two molecules of H/ACA ribonucleoprotein complex subunits DKC1, NOP10, NHP2 and GAR1, and a telomerase RNA template component (TERC). The telomerase holoenzyme complex is associated with TEP1, SMG6/EST1A and POT1. The molecular chaperone HSP90/P23 complex is required for correct assembly and stabilization of the active telomerase. Interacts directly with HSP90A and PTGES3. Interacts with HSPA1A; the interaction occurs in the absence of TERC and dissociates once the complex has formed. Interacts with RAN; the interaction promotes nuclear export of TERT. Interacts with XPO1. Interacts with PTPN11; the interaction retains TERT in the nucleus. Interacts with NCL (via RRM1 and C-terminal RRM4/Arg/Gly-rich domains); the interaction is important for nucleolar localization of TERT. Interacts with SMARCA4 (via the bromodomain); the interaction regulates Wnt-mediated signaling. Interacts with MCRS1 (isoform MCRS2); the interaction inhibits in vitro telomerase activity. Interacts with PIF1; the interaction has no effect on the elongation activity of TERT. Interacts with PML; the interaction recruits TERT to PML bodies and inhibits telomerase activity. Interacts with GNL3L. Interacts with isoform 1 and isoform 2 of NVL. Interacts with DHX36. Interacts with ATF7. Phosphorylation at Tyr-707 under oxidative stress leads to translocation of TERT to the cytoplasm and reduces its antiapoptotic activity. Dephosphorylated by SHP2/PTPN11 leading to nuclear retention. Phosphorylation at Ser-227 by the AKT pathway promotes nuclear location. Phosphorylation at the G2/M phase at Ser-457 by DYRK2 promotes ubiquitination by the EDVP complex and degradation. In terms of processing, ubiquitinated by the EDVP complex, a E3 ligase complex following phosphorylation at Ser-457 by DYRK2. Ubiquitinated leads to proteasomal degradation. Post-translationally, (Microbial infection) In case of infection by HIV-1, the EDVP complex is hijacked by HIV-1 via interaction between HIV-1 Vpr and DCAF1/VPRBP, leading to ubiquitination and degradation. As to expression, expressed at a high level in thymocyte subpopulations, at an intermediate level in tonsil T-lymphocytes, and at a low to undetectable level in peripheral blood T-lymphocytes.

It is found in the nucleus. The protein localises to the nucleolus. Its subcellular location is the nucleoplasm. It localises to the chromosome. The protein resides in the telomere. It is found in the cytoplasm. The protein localises to the PML body. It catalyses the reaction DNA(n) + a 2'-deoxyribonucleoside 5'-triphosphate = DNA(n+1) + diphosphate. Its function is as follows. Telomerase is a ribonucleoprotein enzyme essential for the replication of chromosome termini in most eukaryotes. Active in progenitor and cancer cells. Inactive, or very low activity, in normal somatic cells. Catalytic component of the teleromerase holoenzyme complex whose main activity is the elongation of telomeres by acting as a reverse transcriptase that adds simple sequence repeats to chromosome ends by copying a template sequence within the RNA component of the enzyme. Catalyzes the RNA-dependent extension of 3'-chromosomal termini with the 6-nucleotide telomeric repeat unit, 5'-TTAGGG-3'. The catalytic cycle involves primer binding, primer extension and release of product once the template boundary has been reached or nascent product translocation followed by further extension. More active on substrates containing 2 or 3 telomeric repeats. Telomerase activity is regulated by a number of factors including telomerase complex-associated proteins, chaperones and polypeptide modifiers. Modulates Wnt signaling. Plays important roles in aging and antiapoptosis. The polypeptide is Telomerase reverse transcriptase (TERT) (Homo sapiens (Human)).